Reading from the N-terminus, the 146-residue chain is Hemoglobin subunit beta (146 aa).

Val-1 is subject to N-acetylvaline. The 145-residue stretch at 2 to 146 (HLTGEEKSAV…VANALAHKYH (145 aa)) folds into the Globin domain. Thr-12 bears the Phosphothreonine mark. Ser-44 carries the post-translational modification Phosphoserine. At Lys-59 the chain carries N6-acetyllysine. His-63 lines the heme b pocket. Lys-82 is modified (N6-acetyllysine). His-92 contacts heme b. At Cys-93 the chain carries S-nitrosocysteine. Lys-144 is subject to N6-acetyllysine.

Belongs to the globin family. In terms of assembly, heterotetramer of two alpha chains and two beta chains. In terms of tissue distribution, red blood cells.

In terms of biological role, involved in oxygen transport from the lung to the various peripheral tissues. The sequence is that of Hemoglobin subunit beta (HBB) from Saguinus mystax (Moustached tamarin).